A 420-amino-acid polypeptide reads, in one-letter code: Glucose-1-phosphate adenylyltransferase (420 aa).

Alpha-D-glucose 1-phosphate contacts are provided by residues Tyr-107, Gly-172, 187-188, and Ser-205; that span reads EK.

This sequence belongs to the bacterial/plant glucose-1-phosphate adenylyltransferase family. In terms of assembly, homotetramer.

The catalysed reaction is alpha-D-glucose 1-phosphate + ATP + H(+) = ADP-alpha-D-glucose + diphosphate. It participates in glycan biosynthesis; glycogen biosynthesis. In terms of biological role, involved in the biosynthesis of ADP-glucose, a building block required for the elongation reactions to produce glycogen. Catalyzes the reaction between ATP and alpha-D-glucose 1-phosphate (G1P) to produce pyrophosphate and ADP-Glc. This chain is Glucose-1-phosphate adenylyltransferase, found in Sinorhizobium fredii (strain NBRC 101917 / NGR234).